We begin with the raw amino-acid sequence, 57 residues long: Potassium channel toxin alpha-KTx 17.2 (57 aa).

The N-terminal stretch at 1-26 (MKTIIVLLLLTIVAAAVVESSPKARR) is a signal peptide. Disulfide bonds link Cys-30–Cys-46, Cys-36–Cys-51, and Cys-40–Cys-53.

Belongs to the short scorpion toxin superfamily. Potassium channel inhibitor family. Alpha-KTx 17 subfamily. As to expression, expressed by the venom gland.

It localises to the secreted. In terms of biological role, inhibits voltage-gated potassium channels. In Lychas mucronatus (Chinese swimming scorpion), this protein is Potassium channel toxin alpha-KTx 17.2.